A 338-amino-acid polypeptide reads, in one-letter code: MLNEREKILLKTLVERYIHEGQPVGSRSLAKFSGLDLSPATIRNVMTDLEEMGYVSSPHTSAGRMPTTLGYRFFVDTLLVVKSLDNEQITLLENQLHPNNPTHLMNVTSRLLSELTRFVGVVVTPKRMGGAVFRHIEFVALTEKRILLILVTPEGDVQNRIILTETAYSQSDLIEAGNFLNQHYAGCTLEEIRSGLQRELTQLRRDMTGLMNAAIEIGNDALQESSEAVVIAGEHRLFDVRDLSDNLSSLKSLFEMFERKSKLLQLMELSRQAHGVKIFIGGESDETMLEEVSVVTAPYEMEGKIVGTVGVIGPRRMAYERIIPIVDITAKLLSSNLS.

This sequence belongs to the HrcA family.

Negative regulator of class I heat shock genes (grpE-dnaK-dnaJ and groELS operons). Prevents heat-shock induction of these operons. This is Heat-inducible transcription repressor HrcA from Nitrosomonas europaea (strain ATCC 19718 / CIP 103999 / KCTC 2705 / NBRC 14298).